The chain runs to 206 residues: Bis(5'-adenosyl)-triphosphatase (206 aa).

The HIT domain maps to 3-115; that stretch reads KPIYFSKFLV…KINNVGDLIY (113 aa). Residues 96-100 carry the Histidine triad motif motif; the sequence is HLHTH. Histidine 98 functions as the Tele-AMP-histidine intermediate in the catalytic mechanism. The interval 143-164 is disordered; the sequence is RQARKNNSTSATVDGDELSQGP.

In terms of assembly, homodimer. Mn(2+) is required as a cofactor.

It is found in the cytoplasm. It localises to the nucleus. Its subcellular location is the mitochondrion. The enzyme catalyses P(1),P(3)-bis(5'-adenosyl) triphosphate + H2O = AMP + ADP + 2 H(+). In terms of biological role, cleaves A-5'-PPP-5'A to yield AMP and ADP. Can cleave all dinucleoside polyphosphates, provided the phosphate chain contains at least 3 phosphates and that 1 of the 2 bases composing the nucleotide is a purine. Is most effective on dinucleoside triphosphates. Negatively regulates intracellular dinucleoside polyphosphate levels, which elevate following heat shock. This chain is Bis(5'-adenosyl)-triphosphatase (HNT2), found in Saccharomyces cerevisiae (strain RM11-1a) (Baker's yeast).